The primary structure comprises 354 residues: GDSL esterase/lipase At3g09930 (354 aa).

An N-terminal signal peptide occupies residues 1 to 24; sequence MELPKLLISLFLFSFSSFFLGAES. The active-site Nucleophile is serine 46. N-linked (GlcNAc...) asparagine glycosylation is found at asparagine 133, asparagine 233, asparagine 237, asparagine 256, and asparagine 300. Active-site residues include aspartate 329 and histidine 332.

This sequence belongs to the 'GDSL' lipolytic enzyme family.

The protein resides in the secreted. The protein is GDSL esterase/lipase At3g09930 of Arabidopsis thaliana (Mouse-ear cress).